We begin with the raw amino-acid sequence, 148 residues long: UPF0179 protein Ta1159 (148 aa).

It belongs to the UPF0179 family.

The polypeptide is UPF0179 protein Ta1159 (Thermoplasma acidophilum (strain ATCC 25905 / DSM 1728 / JCM 9062 / NBRC 15155 / AMRC-C165)).